Consider the following 395-residue polypeptide: Nitrite extrusion protein (395 aa).

12 consecutive transmembrane segments (helical) span residues 15–35, 44–64, 73–93, 96–116, 133–153, 160–180, 203–223, 240–262, 271–291, 293–313, 330–350, and 357–377; these read SLVA…QITL, ISLV…PLGY, LMFM…SIAD, FDLI…SIGV, GIYG…PVIA, STVQ…VLFG, VLWF…AFTI, AGLR…GFLA, LMFV…SPTI, LYTF…GTVF, IVSA…ASVF, and AIGF…VIWM.

This sequence belongs to the major facilitator superfamily. Nitrate/nitrite porter (TC 2.A.1.8) family.

The protein resides in the cell membrane. Involved in excretion of nitrite produced by the dissimilatory reduction of nitrate. The sequence is that of Nitrite extrusion protein (narK) from Bacillus subtilis (strain 168).